The sequence spans 389 residues: Phospho-N-acetylmuramoyl-pentapeptide-transferase (389 aa).

Helical transmembrane passes span 21 to 41, 70 to 90, 97 to 117, 134 to 154, 189 to 209, 222 to 242, 259 to 279, 286 to 306, 311 to 331, and 366 to 386; these read FITF…LVTG, GTPT…TLLW, FIWV…VDDY, YMWQ…SVSA, TISY…VIVG, GLAI…AYLT, AGEL…FLWF, VFMG…IAVI, VVLF…MLQV, and QVVV…LSTL.

The protein belongs to the glycosyltransferase 4 family. MraY subfamily. Mg(2+) is required as a cofactor.

The protein localises to the cell inner membrane. The catalysed reaction is UDP-N-acetyl-alpha-D-muramoyl-L-alanyl-gamma-D-glutamyl-meso-2,6-diaminopimeloyl-D-alanyl-D-alanine + di-trans,octa-cis-undecaprenyl phosphate = di-trans,octa-cis-undecaprenyl diphospho-N-acetyl-alpha-D-muramoyl-L-alanyl-D-glutamyl-meso-2,6-diaminopimeloyl-D-alanyl-D-alanine + UMP. It functions in the pathway cell wall biogenesis; peptidoglycan biosynthesis. Its function is as follows. Catalyzes the initial step of the lipid cycle reactions in the biosynthesis of the cell wall peptidoglycan: transfers peptidoglycan precursor phospho-MurNAc-pentapeptide from UDP-MurNAc-pentapeptide onto the lipid carrier undecaprenyl phosphate, yielding undecaprenyl-pyrophosphoryl-MurNAc-pentapeptide, known as lipid I. This chain is Phospho-N-acetylmuramoyl-pentapeptide-transferase, found in Janthinobacterium sp. (strain Marseille) (Minibacterium massiliensis).